The sequence spans 497 residues: Vacuolar fusion protein CCZ1 homolog B (497 aa).

Residues 244–284 form a disordered region; it reads GTSSWSYLRKGSGSPQISSRSTTVPPLGSGGTLPSGNGSST.

Belongs to the CCZ1 family. In terms of assembly, interacts with MON1.

It is found in the endosome. The protein localises to the prevacuolar compartment. In terms of biological role, plays an important role in membrane trafficking through the secretory apparatus. In complex with MON1, acts as a guanine exchange factor (GEF) for RABG3F of the RAB7 protein family. Promotes the exchange of GDP to GTP, converting RABG3F from an inactive GDP-bound form into an active GTP-bound form. The RABG3F active form is involved in protein trafficking from prevacuolar compartments (PVCs) to vacuoles. May serve as a linker between Rab5 and Rab7 protein families in PVCs and mediate PVC maturation. The polypeptide is Vacuolar fusion protein CCZ1 homolog B (Arabidopsis thaliana (Mouse-ear cress)).